A 1265-amino-acid chain; its full sequence is Protein diaphanous homolog 1 (1265 aa).

Methionine 1 bears the N-acetylmethionine mark. A compositionally biased stretch (gly residues) spans 1–12; that stretch reads MEPSGGGLGPGR. Disordered regions lie at residues 1-42 and 54-83; these read MEPS…FTLK and SMRIKKEKEKPNSAHRNSSASYGDDPTAQS. Serine 22 carries the post-translational modification Phosphoserine. Residues 54-65 are compositionally biased toward basic and acidic residues; that stretch reads SMRIKKEKEKPN. Over residues 67–83 the composition is skewed to polar residues; the sequence is AHRNSSASYGDDPTAQS. Residues 84–449 enclose the GBD/FH3 domain; the sequence is LQDISDDQVL…QIVLHKNGTD (366 aa). Residues 474–568 adopt a coiled-coil conformation; that stretch reads VEKSEAKATE…KKEMASLSAV (95 aa). The disordered stretch occupies residues 573–742; it reads SVSSSAAVPQ…PPPPGMGVPP (170 aa). Composition is skewed to pro residues over residues 594–628 and 645–742; these read IPPPPPPPLPGGAVPPPPPPPLPAGTGIPPPPPLP and IPPP…GVPP. The FH1 domain occupies 625-757; that stretch reads PPLPGGACIS…FGIPAAPVLP (133 aa). At threonine 761 the chain carries Phosphothreonine. The FH2 domain occupies 762-1164; it reads PKKVYKPEVQ…MRRAKLAKEK (403 aa). Lysine 1050 and lysine 1096 each carry N6-acetyllysine. Tyrosine 1114 carries the phosphotyrosine modification. Positions 1141–1185 form a coiled coil; that stretch reads AVKENQKRRETEEKMRRAKLAKEKAEKERLEKQQKREQLIDMNAE. Residues 1187–1215 form the DAD domain; it reads DETGVMDSLLEALQSGAAFRRKRGPRQVN. Serine 1247 is subject to Phosphoserine.

This sequence belongs to the formin homology family. Diaphanous subfamily. In terms of assembly, homodimer. Interacts with the GTP-bound form of RHOA. Interacts with RHOC, PFY1, MAPRE1, BAIAP2 and APC. Interacts with SCAI. Interacts with DCAF7, via FH2 domain. Interacts with NCDN. Interacts with OSBPL10, OSBPL2, VIM, TUBB and DYN1. In terms of processing, phosphorylation at Thr-761 is stimulated by cAMP and regulates stability, complex formation and mitochondrial movement. In terms of tissue distribution, expressed in testis. Present in Sertoli cells (at protein level).

Its subcellular location is the cell membrane. It is found in the cell projection. It localises to the ruffle membrane. The protein resides in the cytoplasm. The protein localises to the cytoskeleton. Its subcellular location is the microtubule organizing center. It is found in the centrosome. It localises to the spindle. The protein resides in the nucleus. In terms of biological role, actin nucleation and elongation factor required for the assembly of F-actin structures, such as actin cables and stress fibers. Binds to the barbed end of the actin filament and slows down actin polymerization and depolymerization. Required for cytokinesis, and transcriptional activation of the serum response factor. DFR proteins couple Rho and Src tyrosine kinase during signaling and the regulation of actin dynamics. Functions as a scaffold protein for MAPRE1 and APC to stabilize microtubules and promote cell migration. Has neurite outgrowth promoting activity. Acts in a Rho-dependent manner to recruit PFY1 to the membrane. The MEMO1-RHOA-DIAPH1 signaling pathway plays an important role in ERBB2-dependent stabilization of microtubules at the cell cortex. It controls the localization of APC and CLASP2 to the cell membrane, via the regulation of GSK3B activity. In turn, membrane-bound APC allows the localization of the MACF1 to the cell membrane, which is required for microtubule capture and stabilization. Plays a role in the regulation of cell morphology and cytoskeletal organization. Required in the control of cell shape. Also acts as an actin nucleation and elongation factor in the nucleus by promoting nuclear actin polymerization inside the nucleus to drive serum-dependent SRF-MRTFA activity. In Rattus norvegicus (Rat), this protein is Protein diaphanous homolog 1.